The following is a 191-amino-acid chain: Calcium-activated potassium channel subunit beta-1 (191 aa).

Residues 1–18 (MVKKLVMAQKRGETRALC) lie on the Cytoplasmic side of the membrane. The helical transmembrane segment at 19–39 (LGVTMVVCAVITYYILVTTVL) threads the bilayer. The Extracellular segment spans residues 40 to 157 (PLYQKSVWTQ…FQRLYGPQAL (118 aa)). N-linked (GlcNAc...) asparagine glycosylation is found at asparagine 80 and asparagine 142. The chain crosses the membrane as a helical span at residues 158 to 178 (LFSLFWPTFLLTGGLLIIAMV). Topologically, residues 179-191 (KSNQYLSILAAQK) are cytoplasmic.

The protein belongs to the KCNMB (TC 8.A.14.1) family. KCNMB1 subfamily. As to quaternary structure, interacts with KCNMA1 tetramer. There are probably 4 molecules of KCMNB1 per KCNMA1 tetramer. In terms of processing, N-glycosylated. In terms of tissue distribution, abundantly expressed in smooth muscle. Low levels of expression in most other tissues. Within the brain, relatively high levels found in hippocampus and corpus callosum.

It is found in the membrane. Functionally, regulatory subunit of the calcium activated potassium KCNMA1 (maxiK) channel. Modulates the calcium sensitivity and gating kinetics of KCNMA1, thereby contributing to KCNMA1 channel diversity. Increases the apparent Ca(2+)/voltage sensitivity of the KCNMA1 channel. It also modifies KCNMA1 channel kinetics and alters its pharmacological properties. It slows down the activation and the deactivation kinetics of the channel. Acts as a negative regulator of smooth muscle contraction by enhancing the calcium sensitivity to KCNMA1. Its presence is also a requirement for internal binding of the KCNMA1 channel opener dehydrosoyasaponin I (DHS-1) triterpene glycoside and for external binding of the agonist hormone 17-beta-estradiol (E2). Increases the binding activity of charybdotoxin (CTX) toxin to KCNMA1 peptide blocker by increasing the CTX association rate and decreasing the dissociation rate. This chain is Calcium-activated potassium channel subunit beta-1 (KCNMB1), found in Homo sapiens (Human).